A 317-amino-acid polypeptide reads, in one-letter code: Tyrosine--tRNA ligase (317 aa).

Y32 is an L-tyrosine binding site. The 'HIGH' region signature appears at 37-45 (PSGEIHLGH). Residues Y152, Q156, D159, and Q174 each contribute to the L-tyrosine site. Positions 208-212 (KMSSS) match the 'KMSKS' region motif. S211 provides a ligand contact to ATP.

It belongs to the class-I aminoacyl-tRNA synthetase family. TyrS type 3 subfamily. Homodimer.

It localises to the cytoplasm. The enzyme catalyses tRNA(Tyr) + L-tyrosine + ATP = L-tyrosyl-tRNA(Tyr) + AMP + diphosphate + H(+). In terms of biological role, catalyzes the attachment of tyrosine to tRNA(Tyr) in a two-step reaction: tyrosine is first activated by ATP to form Tyr-AMP and then transferred to the acceptor end of tRNA(Tyr). The protein is Tyrosine--tRNA ligase of Methanocorpusculum labreanum (strain ATCC 43576 / DSM 4855 / Z).